Here is an 81-residue protein sequence, read N- to C-terminus: Photosystem I iron-sulfur center (81 aa).

4Fe-4S ferredoxin-type domains lie at 2 to 31 (SHSV…MIPW) and 39 to 68 (IASA…VRVY). [4Fe-4S] cluster is bound by residues cysteine 11, cysteine 14, cysteine 17, cysteine 21, cysteine 48, cysteine 51, cysteine 54, and cysteine 58.

In terms of assembly, the eukaryotic PSI reaction center is composed of at least 11 subunits. It depends on [4Fe-4S] cluster as a cofactor.

It localises to the plastid thylakoid membrane. It carries out the reaction reduced [plastocyanin] + hnu + oxidized [2Fe-2S]-[ferredoxin] = oxidized [plastocyanin] + reduced [2Fe-2S]-[ferredoxin]. Functionally, apoprotein for the two 4Fe-4S centers FA and FB of photosystem I (PSI); essential for photochemical activity. FB is the terminal electron acceptor of PSI, donating electrons to ferredoxin. The C-terminus interacts with PsaA/B/D and helps assemble the protein into the PSI complex. Required for binding of PsaD and PsaE to PSI. PSI is a plastocyanin-ferredoxin oxidoreductase, converting photonic excitation into a charge separation, which transfers an electron from the donor P700 chlorophyll pair to the spectroscopically characterized acceptors A0, A1, FX, FA and FB in turn. The protein is Photosystem I iron-sulfur center of Cuscuta obtusiflora (Peruvian dodder).